The primary structure comprises 1453 residues: ABC transporter G family member 34 (1453 aa).

Residues 1–24 (MLGRDEDLVRTMSGRGSLGSTSHR) form a disordered region. Residues 173-446 (LGLFHLLPSK…FEYMGFKCPE (274 aa)) enclose the ABC transporter 1 domain. An ATP-binding site is contributed by 206-213 (GPPSSGKT). An ABC transmembrane type-2 1 domain is found at 524–737 (DLFKACFDRE…GQTALVINEF (214 aa)). Helical transmembrane passes span 542–562 (FVYV…MTVY), 582–602 (LFFS…FTVM), 621–641 (FALP…VIWI), 661–681 (LLAY…LGAL), 687–707 (IANS…GFII), and 773–793 (FWIC…CYII). One can recognise an ABC transporter 2 domain in the interval 852–1105 (LAFNNVNYYV…LVEYFEAIEG (254 aa)). 897 to 904 (GVSGAGKT) serves as a coordination point for ATP. Positions 1177 to 1391 (TQTKACFWKM…TLYGIITSQV (215 aa)) constitute an ABC transmembrane type-2 2 domain. 7 consecutive transmembrane segments (helical) span residues 1196–1216 (YNAI…LLFW), 1230–1250 (NFFG…AATV), 1289–1309 (IQTG…WTVV), 1311–1331 (FFWF…YGMM), 1341–1361 (IAGI…GFLI), 1366–1386 (IPIW…LYGI), and 1422–1442 (FLPV…FAFA).

It belongs to the ABC transporter superfamily. ABCG family. PDR (TC 3.A.1.205) subfamily. In terms of tissue distribution, expressed in roots at low levels.

The protein resides in the membrane. Its function is as follows. May be a general defense protein. This chain is ABC transporter G family member 34 (ABCG34), found in Arabidopsis thaliana (Mouse-ear cress).